The primary structure comprises 122 residues: MIQSQTHLNVADNSGARELMCIRIIGTSNRRYAHIGDVIIAVIKEAVPNSPLERSEVIRAVIVRTSKELKRDNGMIIRYDDNAAVVIDQEGNPKGTRIFGAIARELRQLNFTKIVSLAPEVL.

The protein belongs to the universal ribosomal protein uL14 family. Part of the 50S ribosomal subunit.

Its subcellular location is the plastid. It localises to the chloroplast. In terms of biological role, binds to 23S rRNA. The polypeptide is Large ribosomal subunit protein uL14c (Populus alba (White poplar)).